A 1755-amino-acid polypeptide reads, in one-letter code: MESQQLSQHSPISHGSACASVTSKEVHTNQDPLDVSASKTEECEKASTKANSQQTTTPASSAVPENPHHASPQTAQSHSPQNGPYPQQCMMTQNQANPSGWSFYGHPSMIPYTPYQMSPMYFPPGPQSQFPQYPSSVGTPLSTPSPESGNTFTDSSSADSDMTSTKKYVRPPPMLTSPNDFPNWVKTYIKFLQNSNLGGIIPTVNGKPVRQITDDELTFLYNTFQIFAPSQFLPTWVKDILSVDYTDIMKILSKSIEKMQSDTQEANDIVTLANLQYNGSTPADAFETKVTNIIDRLNNNGIHINNKVACQLIMRGLSGEYKFLRYTRHRHLNMTVAELFLDIHAIYEEQQGSRNSKPNYRRNPSDEKNDSRSYTNTTKPKVIARNPQKTNNSKSKTARAHNVSTSNNSPSTDNDSISKSTTEPIQLNNKHDLHLGQKLTESTVNHTNHSDDELPGHLLLDSGASRTLIRSAHHIHSASSNPDINVVDAQKRNIPINAIGDLQFHFQDNTKTSIKVLHTPNIAYDLLSLNELAAVDITACFTKNVLERSDGTVLAPIVKYGDFYWVSKKYLLPSNISVPTINNVHTSESTRKYPYPFIHRMLAHANAQTIRYSLKNNTITYFNESDVDWSSAIDYQCPDCLIGKSTKHRHIKGSRLKYQNSYEPFQYLHTDIFGPVHNLPKSAPSYFISFTDETTKFRWVYPLHDRREDSILDVFTTILAFIKNQFQASVLVIQMDRGSEYTNRTLHKFLEKNGITPCYTTTADSRAHGVAERLNRTLLDDCRTQLQCSGLPNHLWFSAIEFSTIVRNSLASPKSKKSARQHAGLAGLDISTLLPFGQPVIVNDHNPNSKIHPRGIPGYALHPSRNSYGYIIYLPSLKKTVDTTNYVILQGKESRLDQFNYDALTFDEDLNRLTASYHSFIASNEIQESNDLNIESDHDFQSDIELHPEQPRNVLSKAVSPTDSTPPSTHTEDSKRVSKTNIRAPREVDPNISESNILPSKKRSSTPQISNIESTGSGGMHKLNVPLLAPMSQSNTHESSHASKSKDFRHSDSYSENETNHTNVPISSTGGTNNKTVPQISDQETEKRIIHRSPSIDASPPENNSSHNIVPIKTPTTVSEQNTEESIIADLPLPDLPPESPTEFPDPFKELPPINSHQTNSSLGGIGDSNAYTTINSKKRSLEDNETEIKVSRDTWNTKNMRSLEPPRSKKRIHLIAAVKAVKSIKPIRTTLRYDEAITYNKDIKEKEKYIEAYHKEVNQLLKMNTWDTDKYYDRKEIDPKRVINSMFIFNKKRDGTHKARFVARGDIQHPDTYDTGMQSNTVHHYALMTSLSLALDNNYYITQLDISSAYLYADIKEELYIRPPPHLGMNDKLIRLKKSHYGLKQSGANWYETIKSYLIKQCGMEEVRGWSCVFKNSQVTICLFVDDMILFSKDLNANKKIITTLKKQYDTKIINLGESDNEIQYDILGLEIKYQRGKYMKLGMENSLTEKIPKLNVPLNPKGRKLSAPGQPGLYIDQDELEIDEDEYKEKVHEMQKLIGLASYVGYKFRFDLLYYINTLAQHILFPSRQVLDMTYELIQFMWDTRDKQLIWHKNKPTEPDNKLVAISDASYGNQPYYKSQIGNIFLLNGKVIGGKSTKASLTCTSTTEAEIHAVSEAIPLLNNLSHLVQELNKKPIIKGLLTDSRSTISIIKSTNEEKFRNRFFGTKAMRLRDEVSGNNLYVYYIETKKNIADVMTKPLPIKTFKLLTNKWIH.

Polar residues-rich tracts occupy residues 1–23 (MESQ…SVTS), 48–60 (TKAN…TPAS), 71–93 (SPQT…MMTQ), and 127–152 (QSQF…GNTF). Disordered regions lie at residues 1–93 (MESQ…MMTQ), 126–173 (PQSQ…RPPP), and 352–421 (GSRN…SKST). Residues 153–165 (TDSSSADSDMTST) are compositionally biased toward low complexity. The tract at residues 299–401 (NNGIHINNKV…NSKSKTARAH (103 aa)) is RNA-binding. Residues 402 to 418 (NVSTSNNSPSTDNDSIS) show a composition bias toward low complexity. Residue Ser-416 is modified to Phosphoserine. Residue Asp-461 is the For protease activity; shared with dimeric partner of the active site. An integrase-type zinc finger-like region spans residues 583–640 (NVHTSESTRKYPYPFIHRMLAHANAQTIRYSLKNNTITYFNESDVDWSSAIDYQCPDC). One can recognise an Integrase catalytic domain in the interval 660 to 835 (NSYEPFQYLH…AGLDISTLLP (176 aa)). Positions 671 and 736 each coordinate Mg(2+). Disordered stretches follow at residues 956–1087 (SKAV…ETEK), 1092–1111 (RSPS…NIVP), and 1130–1187 (DLPL…DNET). Low complexity predominate over residues 960 to 969 (SPTDSTPPST). Over residues 1005–1015 (STPQISNIEST) the composition is skewed to polar residues. A compositionally biased stretch (basic and acidic residues) spans 1038–1053 (ESSHASKSKDFRHSDS). Polar residues-rich tracts occupy residues 1054–1082 (YSEN…QISD) and 1101–1111 (PENNSSHNIVP). The short motif at 1178–1212 (KKRSLEDNETEIKVSRDTWNTKNMRSLEPPRSKKR) is the Bipartite nuclear localization signal element. The Reverse transcriptase Ty1/copia-type domain maps to 1338–1476 (NNYYITQLDI…DILGLEIKYQ (139 aa)). Residues Asp-1346, Asp-1427, Asp-1428, Asp-1610, Glu-1652, and Asp-1685 each coordinate Mg(2+). The region spanning 1610–1752 (DASYGNQPYY…IKTFKLLTNK (143 aa)) is the RNase H Ty1/copia-type domain.

As to quaternary structure, the capsid protein forms a homotrimer, from which the VLPs are assembled. The protease is a homodimer, whose active site consists of two apposed aspartic acid residues. In terms of processing, initially, virus-like particles (VLPs) are composed of the structural unprocessed proteins Gag and Gag-Pol, and also contain the host initiator methionine tRNA (tRNA(i)-Met) which serves as a primer for minus-strand DNA synthesis, and a dimer of genomic Ty RNA. Processing of the polyproteins occurs within the particle and proceeds by an ordered pathway, called maturation. First, the protease (PR) is released by autocatalytic cleavage of the Gag-Pol polyprotein yielding capsid protein p45 and a Pol-p154 precursor protein. This cleavage is a prerequisite for subsequent processing of Pol-p154 at the remaining sites to release the mature structural and catalytic proteins. Maturation takes place prior to the RT reaction and is required to produce transposition-competent VLPs.

It localises to the cytoplasm. Its subcellular location is the nucleus. The catalysed reaction is DNA(n) + a 2'-deoxyribonucleoside 5'-triphosphate = DNA(n+1) + diphosphate. It carries out the reaction Endonucleolytic cleavage to 5'-phosphomonoester.. In terms of biological role, capsid protein (CA) is the structural component of the virus-like particle (VLP), forming the shell that encapsulates the retrotransposons dimeric RNA genome. The particles are assembled from trimer-clustered units and there are holes in the capsid shells that allow for the diffusion of macromolecules. CA also has nucleocapsid-like chaperone activity, promoting primer tRNA(i)-Met annealing to the multipartite primer-binding site (PBS), dimerization of Ty1 RNA and initiation of reverse transcription. The aspartyl protease (PR) mediates the proteolytic cleavages of the Gag and Gag-Pol polyproteins after assembly of the VLP. Functionally, reverse transcriptase/ribonuclease H (RT) is a multifunctional enzyme that catalyzes the conversion of the retro-elements RNA genome into dsDNA within the VLP. The enzyme displays a DNA polymerase activity that can copy either DNA or RNA templates, and a ribonuclease H (RNase H) activity that cleaves the RNA strand of RNA-DNA heteroduplexes during plus-strand synthesis and hydrolyzes RNA primers. The conversion leads to a linear dsDNA copy of the retrotransposon that includes long terminal repeats (LTRs) at both ends. Its function is as follows. Integrase (IN) targets the VLP to the nucleus, where a subparticle preintegration complex (PIC) containing at least integrase and the newly synthesized dsDNA copy of the retrotransposon must transit the nuclear membrane. Once in the nucleus, integrase performs the integration of the dsDNA into the host genome. This Saccharomyces cerevisiae (strain ATCC 204508 / S288c) (Baker's yeast) protein is Transposon Ty1-PR1 Gag-Pol polyprotein (TY1B-PR1).